Reading from the N-terminus, the 74-residue chain is Exodeoxyribonuclease 7 small subunit (74 aa).

The protein belongs to the XseB family. As to quaternary structure, heterooligomer composed of large and small subunits.

It localises to the cytoplasm. It catalyses the reaction Exonucleolytic cleavage in either 5'- to 3'- or 3'- to 5'-direction to yield nucleoside 5'-phosphates.. Its function is as follows. Bidirectionally degrades single-stranded DNA into large acid-insoluble oligonucleotides, which are then degraded further into small acid-soluble oligonucleotides. In Thermotoga neapolitana (strain ATCC 49049 / DSM 4359 / NBRC 107923 / NS-E), this protein is Exodeoxyribonuclease 7 small subunit.